The primary structure comprises 474 residues: Pyruvate kinase (474 aa).

Residue Arg37 participates in substrate binding. The K(+) site is built by Asn39, Ser41, and Asp71. 39–42 (NFSH) is an ATP binding site. Residues Arg78 and Lys160 each coordinate ATP. Residue Glu222 participates in Mg(2+) binding. Gly245, Asp246, and Thr278 together coordinate substrate. Asp246 contacts Mg(2+).

It belongs to the pyruvate kinase family. Homotetramer. Requires Mg(2+) as cofactor. K(+) serves as cofactor.

It carries out the reaction pyruvate + ATP = phosphoenolpyruvate + ADP + H(+). Its pathway is carbohydrate degradation; glycolysis; pyruvate from D-glyceraldehyde 3-phosphate: step 5/5. In Agrobacterium vitis (Rhizobium vitis), this protein is Pyruvate kinase (ttuE).